The chain runs to 200 residues: Large ribosomal subunit protein uL4 (200 aa).

A disordered region spans residues 42–65; sequence TRAQKTRSEVSGGGAKPWRQKGTG.

It belongs to the universal ribosomal protein uL4 family. Part of the 50S ribosomal subunit.

In terms of biological role, one of the primary rRNA binding proteins, this protein initially binds near the 5'-end of the 23S rRNA. It is important during the early stages of 50S assembly. It makes multiple contacts with different domains of the 23S rRNA in the assembled 50S subunit and ribosome. Functionally, forms part of the polypeptide exit tunnel. This chain is Large ribosomal subunit protein uL4, found in Vibrio campbellii (strain ATCC BAA-1116).